Consider the following 424-residue polypeptide: S-adenosylmethionine synthase (424 aa).

His14 serves as a coordination point for ATP. Mg(2+) is bound at residue Asp16. Glu42 is a binding site for K(+). L-methionine-binding residues include Glu55 and Gln98. Residues 98–108 (QSNDISRGIER) are flexible loop. ATP contacts are provided by residues 165-167 (DAK), 242-243 (KF), Asp251, 257-258 (RK), Ala274, and Lys278. An L-methionine-binding site is contributed by Asp251. Lys282 contributes to the L-methionine binding site.

Belongs to the AdoMet synthase family. In terms of assembly, homotetramer; dimer of dimers. Requires Mg(2+) as cofactor. K(+) serves as cofactor.

Its subcellular location is the cytoplasm. The catalysed reaction is L-methionine + ATP + H2O = S-adenosyl-L-methionine + phosphate + diphosphate. Its pathway is amino-acid biosynthesis; S-adenosyl-L-methionine biosynthesis; S-adenosyl-L-methionine from L-methionine: step 1/1. Functionally, catalyzes the formation of S-adenosylmethionine (AdoMet) from methionine and ATP. The overall synthetic reaction is composed of two sequential steps, AdoMet formation and the subsequent tripolyphosphate hydrolysis which occurs prior to release of AdoMet from the enzyme. This chain is S-adenosylmethionine synthase, found in Azobacteroides pseudotrichonymphae genomovar. CFP2.